The sequence spans 536 residues: ATP synthase subunit alpha, mitochondrial (536 aa).

The N-terminal 24 residues, 1-24 (MFKNALRRAGVAAPRISRVAQRGY), are a transit peptide targeting the mitochondrion. Residue 195–202 (GDRQTGKT) coordinates ATP.

F-type ATP synthases have 2 components, the catalytic core F(1) and the membrane-embedded component F(0), linked together by a central stalk and a peripheral stalk. The central stalk, also called rotor shaft, is often seen as part of F(1). The peripheral stalk is seen as part of F(0). F(0) contains the membrane channel next to the rotor. F-type ATP synthases form dimers but each monomer functions independently in ATP generation. The dimer consists of 17 different polypeptides: ATP1 (subunit alpha, 3 molecules per monomer, part of F(1)), ATP2 (subunit beta, 3 copies per monomer, part of F(1)), ATP3 (subunit gamma, part of the central stalk), ATP4 (subunit b, part of the peripheral stalk), ATP5/OSCP (subunit 5/OSCP, part of the peripheral stalk), ATP6 (subunit a, part of the peripheral stalk), ATP7 (subunit d, part of the peripheral stalk), ATP8 (subunit 8, part of the peripheral stalk), OLI1 (subunit c, part of the rotor, 10 molecules per monomer), ATP14 (subunit h, part of the peripheral stalk), ATP15 (subunit epsilon, part of the central stalk), ATP16 (subunit delta, part of the central stalk), ATP17 (subunit f, part of the peripheral stalk), ATP18 (subunit i/j, part of the peripheral stalk), ATP19 (subunit k, dimer-specific, at interface between monomers), ATP20 (subunit g, at interface between monomers), TIM11 (subunit e, at interface between monomers).

The protein resides in the mitochondrion inner membrane. Its function is as follows. Mitochondrial membrane ATP synthase (F(1)F(0) ATP synthase or Complex V) produces ATP from ADP in the presence of a proton gradient across the membrane which is generated by electron transport complexes of the respiratory chain. F-type ATP synthases consist of two structural domains, F(1) - containing the extramembraneous catalytic core, and F(0) - containing the membrane proton channel, linked together by a central stalk and a peripheral stalk. During catalysis, ATP synthesis in the catalytic domain of F(1) is coupled via a rotary mechanism of the central stalk subunits to proton translocation. Subunits alpha/ATP1 and beta/ATP2 form the catalytic core in F(1). Rotation of the central stalk against the surrounding alpha/ATP1(3)beta/ATP2(3) subunits leads to hydrolysis of ATP in three separate catalytic sites on the beta/ATP2 subunits. Subunit alpha/ATP1 does not bear the catalytic high-affinity ATP-binding sites. This Yarrowia lipolytica (strain CLIB 122 / E 150) (Yeast) protein is ATP synthase subunit alpha, mitochondrial.